The chain runs to 170 residues: dCTP pyrophosphatase 1 (170 aa).

Positions 1 to 25 (MSTAGDGERGTVGQEDSAAARPFRF) are disordered. At Ser-2 the chain carries N-acetylserine. Ser-2 is subject to Phosphoserine. Substrate-binding positions include His-38 and 47–51 (WEQFH). The Mg(2+) site is built by Glu-63 and Glu-66. Trp-73 serves as a coordination point for substrate. Mg(2+) is bound by residues Glu-95 and Asp-98. Position 102 (Tyr-102) interacts with substrate. Residues 150-170 (SENQAVGAGDPASELRDQAST) form a disordered region.

In terms of assembly, homotetramer. Mg(2+) is required as a cofactor. In terms of tissue distribution, ubiquitous. Highly expressed in heart, liver, skeletal muscle, cerebellum, brain, and salivary gland.

It is found in the cytoplasm. The protein localises to the cytosol. The catalysed reaction is dCTP + H2O = dCMP + diphosphate + H(+). With respect to regulation, inhibited by divalent calcium or cadmium ions. Functionally, hydrolyzes deoxynucleoside triphosphates (dNTPs) to the corresponding nucleoside monophosphates. Has a strong preference for dCTP and its analogs including 5-iodo-dCTP and 5-methyl-dCTP for which it may even have a higher efficiency. May protect DNA or RNA against the incorporation of these genotoxic nucleotide analogs through their catabolism. The polypeptide is dCTP pyrophosphatase 1 (Mus musculus (Mouse)).